The primary structure comprises 415 residues: Plant UBX domain-containing protein 16 (415 aa).

A UBA domain is found at 19 to 69 (QLDEEIVLFRQDQLISSFLEIAVDQTAETARILLQTTDWNIDQAVNLFLTN). In terms of domain architecture, UBX spans 333–413 (DRSVVCSLCV…GLANSLISVT (81 aa)).

This Arabidopsis thaliana (Mouse-ear cress) protein is Plant UBX domain-containing protein 16.